Here is a 1426-residue protein sequence, read N- to C-terminus: Protein RhsD (1426 aa).

Positions 256-285 (AEEARTSSLSSSDSSRPLSASAFPDTLPGT) are disordered. Over residues 262-277 (SSLSSSDSSRPLSASA) the composition is skewed to low complexity. The interval 320–1197 (YTEAGELLAV…LNEENPHHVY (878 aa)) is 28 X approximate tandem repeats. 27 consecutive repeat copies span residues 334–356 (NTQVRAFTYDAQHPGRMVAHRYA), 357–378 (GRPEMRYRYDDTGRVVEQLNPA), 379–421 (GLSY…ELAD), 422–442 (GSVTRSGYDAAGRLTAQTDAA), 443–464 (GRRTEYGLNVVSGDITDITTPD), 465–485 (GRETKFYYNDGNQLTAVVSPD), 486–506 (GLESRREYDEPGRLVSETSRS), 507–529 (GETVRYRYDDAHSELPATTTDAT), 530–550 (GSTRQMTWSRYGQLLAFTDCS), 551–571 (GYQTRYEYDRFGQMTAVHREE), 572–592 (GISLYRRYDNRGRLTSVKDAQ), 593–613 (GRETRYEYNAAGDLTAVITPD), 614–633 (GNRSETQYDAWGKAVSTTQG), 634–654 (GLTRSMEYDAAGRVISLTNEN), 655–675 (GSHSVFSYDALDRLVQQGGFD), 676–695 (GRTQRYHYDLTGKLTQSEDE), 696–715 (GLVILWYYDESDRITHRTVN), 716–738 (GEPAEQWQYDGHGWLTDISHLSE), 739–762 (GHRVAVHYGYDDKGRLTGECQTVE), 812–832 (GGTPLVEYTRDRLHRETVRSF), 833–861 (GSMAGSNAAYELTSTYTPAGQLQSQHLNS), 862–882 (LVYDRDYGWSDNGDLVRISGP), 883–905 (RQTREYGYSATGRLESVRTLAPD), 906–941 (LDIRIPYATDPAGNRLPDPELHPDSTLTVWPDNRIA), 942–970 (EDAHYVYRHDEYGRLTEKTDRIPAGVIRT), 971–995 (DDERTHHYHYDSQHRLVFYTRIQHG), and 996–1030 (EPLVESRYLYDPLGRRMAKRVWRRERDLTGWMSLS). Over residues 1073–1085 (ENGEREKAQRRSL) the composition is skewed to basic and acidic residues. The disordered stretch occupies residues 1073-1097 (ENGEREKAQRRSLAETLQQEGSENG). The stretch at 1173–1197 (GNTAWSAEYDEWGNQLNEENPHHVY) is repeat 28.

Belongs to the RHS family.

Rhs elements have a nonessential function. They may play an important role in the natural ecology of the cell. The protein is Protein RhsD (rhsD) of Escherichia coli (strain K12).